Here is a 358-residue protein sequence, read N- to C-terminus: L-Ala-D/L-Glu epimerase (358 aa).

3 residues coordinate substrate: R24, T135, and K160. Residue K162 is the Proton acceptor; specific for (R)-substrate epimerization of the active site. Positions 190, 218, and 243 each coordinate Mg(2+). The active-site Proton acceptor; specific for (S)-substrate epimerization is the K267. C295, D320, and D322 together coordinate substrate.

It belongs to the mandelate racemase/muconate lactonizing enzyme family. The cofactor is Mg(2+).

It catalyses the reaction L-alanyl-L-glutamate = L-alanyl-D-glutamate. Its pathway is cell wall degradation; peptidoglycan degradation. In terms of biological role, catalyzes the epimerization of L-Ala-D-Glu to L-Ala-L-Glu and has probably a role in the metabolism of the murein peptide, of which L-Ala-D-Glu is a component. Is also able to catalyze the epimerization of L-Ala-D-Asp. This is L-Ala-D/L-Glu epimerase from Clostridium acetobutylicum (strain ATCC 824 / DSM 792 / JCM 1419 / IAM 19013 / LMG 5710 / NBRC 13948 / NRRL B-527 / VKM B-1787 / 2291 / W).